The following is a 370-amino-acid chain: Protein FAM110B (370 aa).

Disordered regions lie at residues 127–151 (SSEGSSSGSGHKHSSRNWPPHRSEA) and 237–256 (KSPEADPVEPACGVSRRPSL). Residues Ser-238 and Ser-301 each carry the phosphoserine modification. Residues 317–337 (DCEQSQDSNSDLRNDDSANDR) are disordered. The span at 326 to 335 (SDLRNDDSAN) shows a compositional bias: basic and acidic residues.

The protein belongs to the FAM110 family. As to expression, detected in thyroid, spleen and testis, and at lower levels in stomach, spinal cord, lymph node, trachea, adrenal gland, prostate, ovary and intestine.

It localises to the cytoplasm. Its subcellular location is the cytoskeleton. The protein resides in the microtubule organizing center. The protein localises to the centrosome. Functionally, may be involved in tumor progression. The chain is Protein FAM110B (FAM110B) from Homo sapiens (Human).